Reading from the N-terminus, the 423-residue chain is Glucose-1-phosphate adenylyltransferase (423 aa).

Alpha-D-glucose 1-phosphate contacts are provided by residues Tyr-108, Gly-173, 188–189, and Ser-207; that span reads EK.

Belongs to the bacterial/plant glucose-1-phosphate adenylyltransferase family. As to quaternary structure, homotetramer.

The enzyme catalyses alpha-D-glucose 1-phosphate + ATP + H(+) = ADP-alpha-D-glucose + diphosphate. Its pathway is glycan biosynthesis; glycogen biosynthesis. Functionally, involved in the biosynthesis of ADP-glucose, a building block required for the elongation reactions to produce glycogen. Catalyzes the reaction between ATP and alpha-D-glucose 1-phosphate (G1P) to produce pyrophosphate and ADP-Glc. In Francisella tularensis subsp. holarctica (strain FTNF002-00 / FTA), this protein is Glucose-1-phosphate adenylyltransferase.